The primary structure comprises 449 residues: Phosphoglucosamine mutase (449 aa).

The active-site Phosphoserine intermediate is the serine 101. The Mg(2+) site is built by serine 101, aspartate 241, aspartate 243, and aspartate 245. At serine 101 the chain carries Phosphoserine.

Belongs to the phosphohexose mutase family. Requires Mg(2+) as cofactor. In terms of processing, activated by phosphorylation.

The enzyme catalyses alpha-D-glucosamine 1-phosphate = D-glucosamine 6-phosphate. Catalyzes the conversion of glucosamine-6-phosphate to glucosamine-1-phosphate. This chain is Phosphoglucosamine mutase, found in Alkaliphilus oremlandii (strain OhILAs) (Clostridium oremlandii (strain OhILAs)).